Here is a 451-residue protein sequence, read N- to C-terminus: Phosphoglucosamine mutase (451 aa).

Serine 107 functions as the Phosphoserine intermediate in the catalytic mechanism. The Mg(2+) site is built by serine 107, aspartate 246, aspartate 248, and aspartate 250. Phosphoserine is present on serine 107.

The protein belongs to the phosphohexose mutase family. Mg(2+) is required as a cofactor. Post-translationally, activated by phosphorylation.

The enzyme catalyses alpha-D-glucosamine 1-phosphate = D-glucosamine 6-phosphate. In terms of biological role, catalyzes the conversion of glucosamine-6-phosphate to glucosamine-1-phosphate. The sequence is that of Phosphoglucosamine mutase from Burkholderia cenocepacia (strain ATCC BAA-245 / DSM 16553 / LMG 16656 / NCTC 13227 / J2315 / CF5610) (Burkholderia cepacia (strain J2315)).